Reading from the N-terminus, the 312-residue chain is NAD(P)(+)--arginine ADP-ribosyltransferase 1 (312 aa).

The first 20 residues, 1–20, serve as a signal peptide directing secretion; the sequence is MELLALRWVLLAGTLLSTSA. Residues 21–31 constitute a propeptide that is removed on maturation; that stretch reads ASSALQEGDLG. 2 cysteine pairs are disulfide-bonded: Cys51/Cys260 and Cys159/Cys208. Positions 71–256 constitute a TR mART core domain; the sequence is IAYAVTWRQA…IQLHSKGKMS (186 aa). The NAD(+) site is built by Tyr108, Arg164, and Gln183. The active site involves Arg164. Residue Ser186 is part of the active site. Ser217 contacts NAD(+). Residue Glu224 is part of the active site. Residues 267–312 constitute a propeptide that is removed on maturation; the sequence is GGQWGRGHQEVGLGLSPGLSLPVLPCRRRVWEGLGHREGDPIPAAV.

This sequence belongs to the Arg-specific ADP-ribosyltransferase family.

Its subcellular location is the secreted. It localises to the extracellular space. The catalysed reaction is L-arginyl-[protein] + NAD(+) = N(omega)-(ADP-D-ribosyl)-L-arginyl-[protein] + nicotinamide + H(+). In Gallus gallus (Chicken), this protein is NAD(P)(+)--arginine ADP-ribosyltransferase 1.